The sequence spans 351 residues: Pentatricopeptide repeat-containing protein At3g56030, mitochondrial (351 aa).

Residues 1-41 (MFRLKPLISVDLNQTMSLLRRFVKEANNSRFLLQSISGRSF) constitute a mitochondrion transit peptide. PPR repeat units follow at residues 124–158 (RKHSYETLIARLCKLGRIDDALVLINDMAIGEFGL), 159–193 (STCVFHPILNTLTKKNRIEEAWRVVELMRSHAIPV), 194–224 (DVTSYNYFLTSHCYDGDVAEASRVLRKMEEE), and 232–266 (DTRTYDALVLGACKSGRVEAAMAILRRMEEEGLSV).

It belongs to the PPR family. P subfamily.

It localises to the mitochondrion. This Arabidopsis thaliana (Mouse-ear cress) protein is Pentatricopeptide repeat-containing protein At3g56030, mitochondrial.